Reading from the N-terminus, the 200-residue chain is LIM domain-containing protein WLIM2a (200 aa).

LIM zinc-binding domains follow at residues 8-68 and 107-167; these read QKCR…LFKE and DKCA…LFKE.

In terms of assembly, interacts with F-actin. In terms of tissue distribution, expressed in roots, leaves, stems, flowers and siliques. Barely detected in pollen.

It localises to the cytoplasm. It is found in the cytoskeleton. In terms of biological role, binds to actin filaments and promotes cross-linking into thick bundles. Has an actin-stabilizing activity. The actin regulatory activities are not regulated by pH and [Ca(2+)]. The protein is LIM domain-containing protein WLIM2a of Arabidopsis thaliana (Mouse-ear cress).